The primary structure comprises 833 residues: Lon protease (833 aa).

The Lon N-terminal domain maps to 3 to 198; it reads YPFMATRGVI…LIFSFLVELK (196 aa). ATP is bound at residue 390-397; sequence GPPGTGKT. The region spanning 627-808 is the Lon proteolytic domain; sequence YERIGAVNGL…DEIFENLFGK (182 aa). Residues S714 and K757 contribute to the active site.

This sequence belongs to the peptidase S16 family. In terms of assembly, homohexamer. Organized in a ring with a central cavity.

It localises to the cytoplasm. It catalyses the reaction Hydrolysis of proteins in presence of ATP.. In terms of biological role, ATP-dependent serine protease that mediates the selective degradation of mutant and abnormal proteins as well as certain short-lived regulatory proteins. Required for cellular homeostasis and for survival from DNA damage and developmental changes induced by stress. Degrades polypeptides processively to yield small peptide fragments that are 5 to 10 amino acids long. Binds to DNA in a double-stranded, site-specific manner. In Mycoplasma mobile (strain ATCC 43663 / 163K / NCTC 11711) (Mesomycoplasma mobile), this protein is Lon protease.